The following is a 110-amino-acid chain: NADH-quinone oxidoreductase subunit K (110 aa).

Helical transmembrane passes span 13–33 (LNHYLILSSLVFTIGMFGLFM), 41–61 (ILMSIELMLLAVNINFVAFSI), and 73–93 (IIILTVAAAETSIGLAILLIY).

It belongs to the complex I subunit 4L family. As to quaternary structure, NDH-1 is composed of 14 different subunits. Subunits NuoA, H, J, K, L, M, N constitute the membrane sector of the complex.

It localises to the cell inner membrane. The catalysed reaction is a quinone + NADH + 5 H(+)(in) = a quinol + NAD(+) + 4 H(+)(out). Functionally, NDH-1 shuttles electrons from NADH, via FMN and iron-sulfur (Fe-S) centers, to quinones in the respiratory chain. The immediate electron acceptor for the enzyme in this species is believed to be ubiquinone. Couples the redox reaction to proton translocation (for every two electrons transferred, four hydrogen ions are translocated across the cytoplasmic membrane), and thus conserves the redox energy in a proton gradient. In Rickettsia felis (strain ATCC VR-1525 / URRWXCal2) (Rickettsia azadi), this protein is NADH-quinone oxidoreductase subunit K.